Consider the following 206-residue polypeptide: Imidazoleglycerol-phosphate dehydratase (206 aa).

Positions 1-21 are disordered; that stretch reads MTTPSTAPTPAPRKAEVSRNT.

It belongs to the imidazoleglycerol-phosphate dehydratase family.

Its subcellular location is the cytoplasm. The catalysed reaction is D-erythro-1-(imidazol-4-yl)glycerol 3-phosphate = 3-(imidazol-4-yl)-2-oxopropyl phosphate + H2O. The protein operates within amino-acid biosynthesis; L-histidine biosynthesis; L-histidine from 5-phospho-alpha-D-ribose 1-diphosphate: step 6/9. The sequence is that of Imidazoleglycerol-phosphate dehydratase from Polaromonas sp. (strain JS666 / ATCC BAA-500).